The following is a 198-amino-acid chain: Glycerol-3-phosphate acyltransferase 2 (198 aa).

4 helical membrane passes run 4–24, 71–91, 113–133, and 147–167; these read TYLL…LVVG, LPMV…AVLG, LLCY…TLLF, and VVAV…AMCL.

The protein belongs to the PlsY family. In terms of assembly, probably interacts with PlsX.

Its subcellular location is the cell membrane. It catalyses the reaction an acyl phosphate + sn-glycerol 3-phosphate = a 1-acyl-sn-glycero-3-phosphate + phosphate. The protein operates within lipid metabolism; phospholipid metabolism. Functionally, catalyzes the transfer of an acyl group from acyl-phosphate (acyl-PO(4)) to glycerol-3-phosphate (G3P) to form lysophosphatidic acid (LPA). This enzyme utilizes acyl-phosphate as fatty acyl donor, but not acyl-CoA or acyl-ACP. The protein is Glycerol-3-phosphate acyltransferase 2 of Bacillus cereus (strain ZK / E33L).